We begin with the raw amino-acid sequence, 200 residues long: uncharacterized protein (200 aa).

This is an uncharacterized protein from Saccharomyces cerevisiae (strain ATCC 204508 / S288c) (Baker's yeast).